Consider the following 125-residue polypeptide: Small ribosomal subunit protein uS13 (125 aa).

Positions 92–125 are disordered; it reads RHRRGLPVRGQRTRTNARTRKGKKKTVGAQAKKK.

This sequence belongs to the universal ribosomal protein uS13 family. In terms of assembly, part of the 30S ribosomal subunit. Forms a loose heterodimer with protein S19. Forms two bridges to the 50S subunit in the 70S ribosome.

Its function is as follows. Located at the top of the head of the 30S subunit, it contacts several helices of the 16S rRNA. In the 70S ribosome it contacts the 23S rRNA (bridge B1a) and protein L5 of the 50S subunit (bridge B1b), connecting the 2 subunits; these bridges are implicated in subunit movement. Contacts the tRNAs in the A and P-sites. The sequence is that of Small ribosomal subunit protein uS13 from Akkermansia muciniphila (strain ATCC BAA-835 / DSM 22959 / JCM 33894 / BCRC 81048 / CCUG 64013 / CIP 107961 / Muc).